The primary structure comprises 147 residues: Large ribosomal subunit protein uL15 (147 aa).

Residues 1–28 (MIRRRKKVRKLRGSHTHGWGCKKKHRGG) show a composition bias toward basic residues. The segment at 1 to 43 (MIRRRKKVRKLRGSHTHGWGCKKKHRGGGSKGGRGMAGTGKRN) is disordered. Gly residues predominate over residues 29-38 (GSKGGRGMAG).

Belongs to the universal ribosomal protein uL15 family. As to quaternary structure, part of the 50S ribosomal subunit.

Functionally, binds to the 23S rRNA. The protein is Large ribosomal subunit protein uL15 of Pyrococcus horikoshii (strain ATCC 700860 / DSM 12428 / JCM 9974 / NBRC 100139 / OT-3).